The primary structure comprises 1134 residues: DENN domain-containing protein 2B (1134 aa).

Residues 1-13 show a composition bias toward polar residues; that stretch reads MTMTANKNSSITH. Positions 1 to 90 are disordered; that stretch reads MTMTANKNSS…DPSPETSPPI (90 aa). Phosphoserine is present on residues S30 and S32. The span at 32 to 43 shows a compositional bias: pro residues; it reads SPPPVLYPPRSP. The residue at position 228 (T228) is a Phosphothreonine. The residue at position 230 (S230) is a Phosphoserine. Disordered regions lie at residues 233–273 and 289–571; these read SYPE…GIRK and LKEQ…KRHS. Residues 249-259 show a composition bias toward basic and acidic residues; sequence SLYRLEKRPGR. Over residues 315-348 the composition is skewed to low complexity; sequence GTLGTLEEPTGTASVSPSSRAGGVAGVAGEAGPP. At T361 the chain carries Phosphothreonine. A Phosphoserine modification is found at S365. The segment covering 370-385 has biased composition (pro residues); it reads LLPPKSSPDPAVNPVP. Residues 389–399 are compositionally biased toward basic and acidic residues; it reads RTFEYEADKNP. Residues 406-428 show a composition bias toward pro residues; sequence GLPPSPTPAAPPPLPSTPAPPVT. A compositionally biased stretch (basic residues) spans 429 to 443; that stretch reads RRPKKDMRGHRKSQN. Residues 453-478 show a composition bias toward polar residues; it reads SSLQSLYPSSPTENGTESQPKFGSKS. Phosphothreonine is present on T479. Composition is skewed to polar residues over residues 511-521 and 542-555; these read KSQQLSENSLD and SLKSNSQSLRSGNW. A Phosphoserine modification is found at S542. Basic residues predominate over residues 559–570; it reads KSHRLPRLPKRH. Phosphoserine is present on residues S571 and S619. Residues 633 to 658 form a disordered region; sequence LSMSSLETASLRDENSESESDSDDRF. A uDENN domain is found at 695–843; sequence EYFVVVSLKK…PFPAPGKTIK (149 aa). Positions 865–998 constitute a cDENN domain; that stretch reads RLEHVDFECL…LQAALEQALE (134 aa). One can recognise a dDENN domain in the interval 1000-1093; that stretch reads KSELISQDSD…QDRELRKCRA (94 aa).

Interacts with ITSN1 and GRB2. Isoform 1 interacts with the SH3 domain of ABL1. In terms of processing, phosphorylated. Phosphorylation decreases ITSN1 binding.

The protein localises to the cytoplasm. Its subcellular location is the cell cortex. It is found in the cell membrane. The protein resides in the recycling endosome. In terms of biological role, may be involved in cytoskeletal organization and tumorogenicity. Seems to be involved in a signaling transduction pathway leading to activation of MAPK1/ERK2. Plays a role in EGFR trafficking from recycling endosomes back to the cell membrane. Functionally, guanine nucleotide exchange factor (GEF) which may activate RAB9A and RAB9B. Promotes the exchange of GDP to GTP, converting inactive GDP-bound Rab proteins into their active GTP-bound form. May block ERK2 activation stimulated by ABL1. May alter cell morphology and cell growth. In Mus musculus (Mouse), this protein is DENN domain-containing protein 2B (Dennd2b).